We begin with the raw amino-acid sequence, 209 residues long: Glutathione S-transferase 2 (209 aa).

A GST N-terminal domain is found at 1–81 (MLDFYYLPGS…YLCDQYGDED (81 aa)). Glutathione contacts are provided by residues Ser-10, 51–53 (RTI), and 65–67 (ESR). The GST C-terminal domain maps to 88–209 (DTIQRAIVNQ…SGAKEFLTYK (122 aa)).

The protein belongs to the GST superfamily. Theta family. Homodimer.

The enzyme catalyses RX + glutathione = an S-substituted glutathione + a halide anion + H(+). Its function is as follows. Conjugation of reduced glutathione to a wide number of exogenous and endogenous hydrophobic electrophiles. This chain is Glutathione S-transferase 2 (GstD2), found in Anopheles gambiae (African malaria mosquito).